We begin with the raw amino-acid sequence, 215 residues long: Probable phosphoglycerate mutase GpmB (215 aa).

Substrate-binding positions include 8–15 (RHGETQWN), 21–22 (QG), Arg-58, Arg-60, 82–85 (ELDM), 104–105 (RR), and 151–152 (GI). The active-site Tele-phosphohistidine intermediate is His-9. Glu-82 functions as the Proton donor/acceptor in the catalytic mechanism.

The protein belongs to the phosphoglycerate mutase family. GpmB subfamily.

It catalyses the reaction (2R)-2-phosphoglycerate = (2R)-3-phosphoglycerate. The protein operates within carbohydrate degradation; glycolysis; pyruvate from D-glyceraldehyde 3-phosphate: step 3/5. This Klebsiella pneumoniae (strain 342) protein is Probable phosphoglycerate mutase GpmB.